A 207-amino-acid polypeptide reads, in one-letter code: Guanylate kinase (207 aa).

Positions 4–184 constitute a Guanylate kinase-like domain; that stretch reads NMYYAISAPS…TLNKIKTIII (181 aa). 11–18 contacts ATP; the sequence is APSGTGKS.

Belongs to the guanylate kinase family.

Its subcellular location is the cytoplasm. It catalyses the reaction GMP + ATP = GDP + ADP. In terms of biological role, essential for recycling GMP and indirectly, cGMP. The polypeptide is Guanylate kinase (Wigglesworthia glossinidia brevipalpis).